The following is an 810-amino-acid chain: Transmembrane channel-like protein 6 (810 aa).

The tract at residues 1-26 (MAQSLALALDVPETTGDEGLEPSPYE) is disordered. Over 1–205 (MAQSLALALD…GAFSCCSRLR (205 aa)) the chain is Lumenal. Acidic residues predominate over residues 15–26 (TGDEGLEPSPYE). The residue at position 88 (T88) is a Phosphothreonine. R93 carries the post-translational modification Omega-N-methylarginine. N102 carries N-linked (GlcNAc...) asparagine glycosylation. The residue at position 104 (T104) is a Phosphothreonine. S136 carries the phosphoserine modification. Residues 206–226 (YTCMLALHSLGLALLSGLYAA) traverse the membrane as a helical segment. Over 227–253 (RPWRYALKQIGGQFGSSVLSYFLFLKT) the chain is Cytoplasmic. The helical transmembrane segment at 254–274 (LLAFNALMLLPLLAFLVGVQA) threads the bilayer. The Lumenal portion of the chain corresponds to 275–338 (AFPPDPAGPV…PRLGSLPYNM (64 aa)). Residue N311 is glycosylated (N-linked (GlcNAc...) asparagine). Residues 339–359 (PLAYLFTMGATFFLTCIILVY) traverse the membrane as a helical segment. Topologically, residues 360–429 (SMSHSFGESY…PRSVCGQLRQ (70 aa)) are cytoplasmic. A helical membrane pass occupies residues 430 to 450 (VVVLGLGWLLCLGSTMGCTVA). At 451–468 (VLTFSEVMIQRPASGGQG) the chain is on the lumenal side. A helical membrane pass occupies residues 469–489 (VEALALPLVVSVLNLGASYLF). The Cytoplasmic segment spans residues 490–504 (RGLATLERHDSPVLE). A helical membrane pass occupies residues 505 to 525 (VYMAICRNLILKMAVLGVLCY). The Lumenal segment spans residues 526–552 (HWLGRRVATLQGQCWEDFVGQELYRFM). A helical transmembrane segment spans residues 553–573 (VVDFIFMLLDSLFGELVWRLI). At 574-603 (SEKKLKRGQKPEFDIARNVLDLIYGQTLTW) the chain is on the cytoplasmic side. A helical transmembrane segment spans residues 604 to 624 (LGVLFSPLLPAVQILRLLFLF). At 625–649 (HIKKASLMANCQAPRRPWLASHMST) the chain is on the lumenal side. A helical transmembrane segment spans residues 650–670 (VFLTLLCFPSFLGAAVFLCYA). Topologically, residues 671–721 (VWQVRPSSTCGPFRTLNTMYEAGTVWVRRLEHAGSGASWLPWLHHFLVENT) are cytoplasmic. The helical transmembrane segment at 722–742 (FFLFLASALLLAVIYFNIQVV) threads the bilayer. Topologically, residues 743 to 810 (KGQRKVICLL…QKEPCNPRSP (68 aa)) are lumenal. A disordered region spans residues 775 to 810 (EEEGRSRPGRTQDATEPPAWHEDGGDQKEPCNPRSP). A compositionally biased stretch (basic and acidic residues) spans 793–810 (AWHEDGGDQKEPCNPRSP).

The protein belongs to the TMC family. In terms of assembly, interacts with TMC8. Interacts and forms a complex with TMC8 and CIB1; the interaction stabilizes each component of the complex. Interacts and forms a complex with TMC8 and SLC30A1/ZNT1; the interaction regulates zinc transport into the ER. In terms of tissue distribution, widely expressed. Highly expressed in thymus, lung and spleen. Expressed in lymphocytes and peripheral lymphocytes. Expressed in small and medium dorsal root ganglion (DRG) neurons.

It localises to the endoplasmic reticulum membrane. Functionally, acts as a regulatory protein involved in the regulation of numerous cellular processes. Together with its homolog TMC8/EVER2, forms a complex with calcium-binding protein CIB1 in lymphocytes and keratynocytes where TMC6 and TMC8 stabilize CIB1 and reciprocally. Together with TMC8, also forms a complex with and activates zinc transporter ZNT1 at the ER membrane of keratynocytes, thereby facilitating zinc uptake into the ER. Down-regulates the activity of transcription factors induced by zinc and cytokines. Also plays a role in thermal sensation by inhibiting the M-channel (KCNQ2-KCNQ3 channel) current in primary sensory neurons. The chain is Transmembrane channel-like protein 6 from Mus musculus (Mouse).